The sequence spans 204 residues: Probable 5-formyltetrahydrofolate cyclo-ligase (204 aa).

Residue 5–9 (KNQLR) coordinates ATP. Substrate contacts are provided by residues Glu57, Trp102, and 140–144 (HGKGY). Residues 139–146 (GHGKGYYD) and Asp188 each bind ATP.

This sequence belongs to the 5-formyltetrahydrofolate cyclo-ligase family.

The enzyme catalyses (6S)-5-formyl-5,6,7,8-tetrahydrofolate + ATP = (6R)-5,10-methenyltetrahydrofolate + ADP + phosphate. The polypeptide is Probable 5-formyltetrahydrofolate cyclo-ligase (Schizosaccharomyces pombe (strain 972 / ATCC 24843) (Fission yeast)).